Consider the following 154-residue polypeptide: Transcriptional repressor NrdR (154 aa).

Residues 3–34 (CPFCGANDTKVIDSRLVAEGEQVRRRRECLAC) fold into a zinc finger. Residues 49–139 (PRLIKQDGSR…VYRRFQDLNE (91 aa)) enclose the ATP-cone domain.

Belongs to the NrdR family. It depends on Zn(2+) as a cofactor.

Functionally, negatively regulates transcription of bacterial ribonucleotide reductase nrd genes and operons by binding to NrdR-boxes. The protein is Transcriptional repressor NrdR of Pseudomonas syringae pv. tomato (strain ATCC BAA-871 / DC3000).